A 183-amino-acid chain; its full sequence is Orotate phosphoribosyltransferase (183 aa).

Residues R100, K101, K104, H106, and 126 to 134 contribute to the 5-phospho-alpha-D-ribose 1-diphosphate site; that span reads EDVVTTGSS. Orotate is bound by residues T130 and R158.

This sequence belongs to the purine/pyrimidine phosphoribosyltransferase family. PyrE subfamily. As to quaternary structure, homodimer. The cofactor is Mg(2+).

It carries out the reaction orotidine 5'-phosphate + diphosphate = orotate + 5-phospho-alpha-D-ribose 1-diphosphate. It participates in pyrimidine metabolism; UMP biosynthesis via de novo pathway; UMP from orotate: step 1/2. Catalyzes the transfer of a ribosyl phosphate group from 5-phosphoribose 1-diphosphate to orotate, leading to the formation of orotidine monophosphate (OMP). The polypeptide is Orotate phosphoribosyltransferase (Aquifex aeolicus (strain VF5)).